Here is a 274-residue protein sequence, read N- to C-terminus: Imidazole glycerol phosphate synthase subunit HisF (274 aa).

Catalysis depends on residues aspartate 11 and aspartate 134.

The protein belongs to the HisA/HisF family. As to quaternary structure, heterodimer of HisH and HisF.

It is found in the cytoplasm. It carries out the reaction 5-[(5-phospho-1-deoxy-D-ribulos-1-ylimino)methylamino]-1-(5-phospho-beta-D-ribosyl)imidazole-4-carboxamide + L-glutamine = D-erythro-1-(imidazol-4-yl)glycerol 3-phosphate + 5-amino-1-(5-phospho-beta-D-ribosyl)imidazole-4-carboxamide + L-glutamate + H(+). It participates in amino-acid biosynthesis; L-histidine biosynthesis; L-histidine from 5-phospho-alpha-D-ribose 1-diphosphate: step 5/9. IGPS catalyzes the conversion of PRFAR and glutamine to IGP, AICAR and glutamate. The HisF subunit catalyzes the cyclization activity that produces IGP and AICAR from PRFAR using the ammonia provided by the HisH subunit. The protein is Imidazole glycerol phosphate synthase subunit HisF of Methanosphaera stadtmanae (strain ATCC 43021 / DSM 3091 / JCM 11832 / MCB-3).